Consider the following 131-residue polypeptide: Small ribosomal subunit protein uS8 (131 aa).

The protein belongs to the universal ribosomal protein uS8 family. In terms of assembly, part of the 30S ribosomal subunit. Contacts proteins S5 and S12.

Its function is as follows. One of the primary rRNA binding proteins, it binds directly to 16S rRNA central domain where it helps coordinate assembly of the platform of the 30S subunit. The sequence is that of Small ribosomal subunit protein uS8 from Thermodesulfovibrio yellowstonii (strain ATCC 51303 / DSM 11347 / YP87).